Reading from the N-terminus, the 110-residue chain is MMETKATLRGVRLSAQKGRLVADQIRGKKVDQALNILQFSPKKGAAIIKRVLESAIANAEHNDGADIDELKVTTIYVEKGSVLKRFTARAKGRGDRISKQSCHIYVTVGN.

It belongs to the universal ribosomal protein uL22 family. In terms of assembly, part of the 50S ribosomal subunit.

Its function is as follows. This protein binds specifically to 23S rRNA; its binding is stimulated by other ribosomal proteins, e.g. L4, L17, and L20. It is important during the early stages of 50S assembly. It makes multiple contacts with different domains of the 23S rRNA in the assembled 50S subunit and ribosome. Functionally, the globular domain of the protein is located near the polypeptide exit tunnel on the outside of the subunit, while an extended beta-hairpin is found that lines the wall of the exit tunnel in the center of the 70S ribosome. The chain is Large ribosomal subunit protein uL22 from Janthinobacterium sp. (strain Marseille) (Minibacterium massiliensis).